The sequence spans 170 residues: Shikimate kinase (170 aa).

11 to 16 lines the ATP pocket; sequence LSGKST. Ser15 serves as a coordination point for Mg(2+). 3 residues coordinate substrate: Asp33, Arg57, and Gly79. Residue Arg119 coordinates ATP. Arg137 lines the substrate pocket.

Belongs to the shikimate kinase family. In terms of assembly, monomer. Mg(2+) is required as a cofactor.

The protein resides in the cytoplasm. The enzyme catalyses shikimate + ATP = 3-phosphoshikimate + ADP + H(+). It functions in the pathway metabolic intermediate biosynthesis; chorismate biosynthesis; chorismate from D-erythrose 4-phosphate and phosphoenolpyruvate: step 5/7. Functionally, catalyzes the specific phosphorylation of the 3-hydroxyl group of shikimic acid using ATP as a cosubstrate. The protein is Shikimate kinase of Clostridium botulinum (strain Okra / Type B1).